The following is a 391-amino-acid chain: Probable protein arginine N-methyltransferase 6.1 (391 aa).

Residues 1 to 35 (MLPSHLNGHSPLARRCPRLSAASPPATGDSDAAAA) form a disordered region. Residues 20 to 35 (SAASPPATGDSDAAAA) show a composition bias toward low complexity. One can recognise an SAM-dependent MTase PRMT-type domain in the interval 45-391 (DRIYFQSYSH…QTLVKDYAMR (347 aa)). Positions 58, 67, 91, 113, and 142 each coordinate S-adenosyl-L-methionine. Active-site residues include glutamate 156 and glutamate 165.

It belongs to the class I-like SAM-binding methyltransferase superfamily. Protein arginine N-methyltransferase family. PRMT6 subfamily.

Arginine methyltransferase that can both catalyze the formation of omega-N monomethylarginine (MMA) and asymmetrical dimethylarginine (aDMA). This is Probable protein arginine N-methyltransferase 6.1 (PRMT6.1) from Oryza sativa subsp. japonica (Rice).